Consider the following 332-residue polypeptide: Ketol-acid reductoisomerase (NADP(+)) (332 aa).

The 181-residue stretch at 2–182 folds into the KARI N-terminal Rossmann domain; it reads AKIYTDKDVS…GATRAGVIET (181 aa). NADP(+) contacts are provided by residues 25–28, Ser-53, and 83–86; these read YGSQ and DMIQ. The active site involves His-108. Gly-134 contributes to the NADP(+) binding site. Positions 183–328 constitute a KARI C-terminal knotted domain; sequence TFKEETETDL…RSLRDIILRG (146 aa). Mg(2+) contacts are provided by Asp-191, Glu-195, Glu-227, and Glu-231. Ser-252 contacts substrate.

The protein belongs to the ketol-acid reductoisomerase family. Requires Mg(2+) as cofactor.

It catalyses the reaction (2R)-2,3-dihydroxy-3-methylbutanoate + NADP(+) = (2S)-2-acetolactate + NADPH + H(+). It carries out the reaction (2R,3R)-2,3-dihydroxy-3-methylpentanoate + NADP(+) = (S)-2-ethyl-2-hydroxy-3-oxobutanoate + NADPH + H(+). The protein operates within amino-acid biosynthesis; L-isoleucine biosynthesis; L-isoleucine from 2-oxobutanoate: step 2/4. Its pathway is amino-acid biosynthesis; L-valine biosynthesis; L-valine from pyruvate: step 2/4. In terms of biological role, involved in the biosynthesis of branched-chain amino acids (BCAA). Catalyzes an alkyl-migration followed by a ketol-acid reduction of (S)-2-acetolactate (S2AL) to yield (R)-2,3-dihydroxy-isovalerate. In the isomerase reaction, S2AL is rearranged via a Mg-dependent methyl migration to produce 3-hydroxy-3-methyl-2-ketobutyrate (HMKB). In the reductase reaction, this 2-ketoacid undergoes a metal-dependent reduction by NADPH to yield (R)-2,3-dihydroxy-isovalerate. This is Ketol-acid reductoisomerase (NADP(+)) from Sulfolobus acidocaldarius (strain ATCC 33909 / DSM 639 / JCM 8929 / NBRC 15157 / NCIMB 11770).